Consider the following 445-residue polypeptide: UPF0761 membrane protein Mlg_0521 (445 aa).

6 helical membrane passes run Leu56–Phe76, Gly112–Ile132, Phe152–Ile172, Leu195–Val215, Ala225–Trp245, and Ala259–Val279.

The protein belongs to the UPF0761 family.

Its subcellular location is the cell inner membrane. This chain is UPF0761 membrane protein Mlg_0521, found in Alkalilimnicola ehrlichii (strain ATCC BAA-1101 / DSM 17681 / MLHE-1).